We begin with the raw amino-acid sequence, 307 residues long: MVNTHVNLPGLDLKNPVMPASGTFGFGDVPAAQKFDLNDLGAMVIKTTTPHATTGNPQPQIAILEDGVLNSVGLTNPGVDQVISEKLTKLRHQYLDLPIMASVGGDSEDDYVEVAKKLSASGLVNALEINVSCPNVAQGGMSFGVHAGVVEELTKKIKMAVALPIYVKLTPNVTDIVEIAKAAESGGADGISMINTVLGMRIDVKTRKPLLGHNMGGLSGEAVKPIAIRMISQVRQVTQLPIIGMGGISTAQDVIEFILAGANAVAVGSAHFEDELAAKHIAENLPAELEKLGIEDINDLVGQVKFN.

Residues serine 21 and 46–47 contribute to the FMN site; that span reads KT. Substrate contacts are provided by residues lysine 46, 70-74, and asparagine 130; that span reads NSVGL. Asparagine 130 provides a ligand contact to FMN. The Nucleophile role is filled by cysteine 133. FMN is bound by residues lysine 168 and isoleucine 194. Residue 195–196 coordinates substrate; the sequence is NT. Residues glycine 220, 246–247, and 268–269 each bind FMN; these read GG and GS.

The protein belongs to the dihydroorotate dehydrogenase family. Type 1 subfamily. In terms of assembly, homodimer. The cofactor is FMN.

The protein resides in the cytoplasm. The enzyme catalyses (S)-dihydroorotate + fumarate = orotate + succinate. It functions in the pathway pyrimidine metabolism; UMP biosynthesis via de novo pathway. In terms of biological role, catalyzes the conversion of dihydroorotate to orotate with fumarate as the electron acceptor. The protein is Dihydroorotate dehydrogenase A (fumarate) (pyrD) of Lactobacillus delbrueckii subsp. bulgaricus (strain ATCC 11842 / DSM 20081 / BCRC 10696 / JCM 1002 / NBRC 13953 / NCIMB 11778 / NCTC 12712 / WDCM 00102 / Lb 14).